The chain runs to 245 residues: MSTNPKPTFRRILLKLSGEALMGDEGFGIDPKVLDRMAQEVKELVELGIQVGVVIGGGNLFRGEGLAKAGMNRVVGDHMGMLATVMNGLAMRDALHRAYVNARLMSAIPLKGVCDDYNWAEAISLLKSGRVVIFAAGTGNPFCTTDSAACLRGIEIEAEVVLKGTKVDGVYSDDPMKNPDAVKYDELSYSEILEKELKVMDLAAFTMARDHDMPILVFNMNKPGALRRVIMGEEEGTLIRAKKVI.

15 to 18 (KLSG) is an ATP binding site. Residues 23 to 28 (GDEGFG) form an involved in allosteric activation by GTP region. Gly-57 provides a ligand contact to UMP. Gly-58 and Arg-62 together coordinate ATP. Residues Asp-77 and 138–145 (TGNPFCTT) each bind UMP. Residues Thr-165, Tyr-171, and Asp-174 each coordinate ATP.

Belongs to the UMP kinase family. Homohexamer.

It is found in the cytoplasm. It catalyses the reaction UMP + ATP = UDP + ADP. It participates in pyrimidine metabolism; CTP biosynthesis via de novo pathway; UDP from UMP (UMPK route): step 1/1. With respect to regulation, allosterically activated by GTP. Inhibited by UTP. Functionally, catalyzes the reversible phosphorylation of UMP to UDP. The polypeptide is Uridylate kinase (Shewanella sp. (strain W3-18-1)).